Here is a 450-residue protein sequence, read N- to C-terminus: CD209 antigen (450 aa).

At 1 to 37 (MSDSKEPSVQQLGLLEEEQLRGLGFRQTRGYKSLAGC) the chain is on the cytoplasmic side. Short sequence motifs (endocytosis signal) lie at residues 14–15 (LL), 16–18 (EEE), and 31–34 (YKSL). The chain crosses the membrane as a helical; Signal-anchor for type II membrane protein span at residues 38–58 (LGHGALVLQLLSFTLLAGLLI). Residues 59-450 (QVSKFPSSIS…APATPNPPPV (392 aa)) are Extracellular-facing. Asn-80 carries an N-linked (GlcNAc...) asparagine glycan. Repeat copies occupy residues 96–118 (KLQE…PEKS), 119–141 (KQQE…PEKS), 142–164 (KQQE…PEKS), 165–187 (KQQE…PEKS), 188–210 (KQQE…PEKS), 211–233 (KQQE…PEKS), 234–256 (KQQE…PEKS), 257–279 (KQQE…PEKS), and 280–303 (KQQE…RPCP). The interval 96-303 (KLQEIYQELT…AVERLCRPCP (208 aa)) is 9 X approximate tandem repeats. Intrachain disulfides connect Cys-302-Cys-313, Cys-330-Cys-423, and Cys-402-Cys-415. The C-type lectin domain maps to 309-424 (FQGNCYFMSN…CNLAKFWICK (116 aa)). Residues Glu-393, Asn-395, Val-397, Glu-400, Asn-411, and Asp-412 each contribute to the Ca(2+) site.

As to quaternary structure, homotetramer. Interacts with C1QBP; the interaction is indicative for a C1q:C1QBP:CD209 signaling complex. Interacts with ICAM2 and ICAM3 by binding to mannose-like carbohydrates. Interacts (via C-type lectin domain) with CEACAM1 (via Lewis X moieties); this interaction is regulated by the glycosylation pattern of CEACAM1 on cell types and regulates contact between dendritic cells and neutrophils.

Its subcellular location is the membrane. Functionally, pathogen-recognition receptor expressed on the surface of immature dendritic cells (DCs) and involved in initiation of primary immune response. Thought to mediate the endocytosis of pathogens which are subsequently degraded in lysosomal compartments. The receptor returns to the cell membrane surface and the pathogen-derived antigens are presented to resting T-cells via MHC class II proteins to initiate the adaptive immune response. Probably recognizes in a calcium-dependent manner high mannose N-linked oligosaccharides in a variety of pathogen antigens. Its function is as follows. On DCs it is a high affinity receptor for ICAM2 and ICAM3 by binding to mannose-like carbohydrates. May act as a DC rolling receptor that mediates transendothelial migration of DC presursors from blood to tissues by binding endothelial ICAM2. Seems to regulate DC-induced T-cell proliferation by binding to ICAM3 on T-cells in the immunological synapse formed between DC and T-cells. This is CD209 antigen (CD209) from Hylobates lar (Lar gibbon).